The primary structure comprises 350 residues: GTPase Obg (350 aa).

Positions 1-159 (MKLVDEAEIL…RLLKLELRLL (159 aa)) constitute an Obg domain. Residues 127 to 146 (NMHFKSSVNRAPRQSTTGEE) are disordered. Positions 130–143 (FKSSVNRAPRQSTT) are enriched in polar residues. An OBG-type G domain is found at 160 to 337 (ADVGLLGFPN…IMKDVMAFFD (178 aa)). Residues 166-173 (GFPNAGKS), 191-195 (FTTLY), 213-216 (DVPG), 287-290 (NKAD), and 318-320 (SAL) contribute to the GTP site. Residues S173 and T193 each coordinate Mg(2+).

This sequence belongs to the TRAFAC class OBG-HflX-like GTPase superfamily. OBG GTPase family. As to quaternary structure, monomer. Requires Mg(2+) as cofactor.

The protein resides in the cytoplasm. Functionally, an essential GTPase which binds GTP, GDP and possibly (p)ppGpp with moderate affinity, with high nucleotide exchange rates and a fairly low GTP hydrolysis rate. Plays a role in control of the cell cycle, stress response, ribosome biogenesis and in those bacteria that undergo differentiation, in morphogenesis control. This is GTPase Obg from Xanthomonas oryzae pv. oryzae (strain MAFF 311018).